The sequence spans 118 residues: Altered inheritance of mitochondria protein 26, mitochondrial (118 aa).

The next 3 membrane-spanning stretches (helical) occupy residues 7-27, 41-61, and 98-118; these read EHLLLSQLKGSFFLLLLAYFF, LAVTPGAITIAIAIATDSIPA, and FLFCLGSARFCISFPCFGLSI.

Its subcellular location is the mitochondrion membrane. Involved in selective mitochondria autophagy (mitophagy). The polypeptide is Altered inheritance of mitochondria protein 26, mitochondrial (AIM26) (Saccharomyces cerevisiae (strain ATCC 204508 / S288c) (Baker's yeast)).